Consider the following 158-residue polypeptide: Cystin-1 (158 aa).

Positions 1–146 (MGSGSSRSSR…AAISYDHSEE (146 aa)) are disordered. The N-myristoyl glycine moiety is linked to residue Gly-2. Composition is skewed to low complexity over residues 19-32 (ESLP…ALEG) and 39-52 (PVAA…AAEE). The Ciliary targeting motif motif lies at 29 to 33 (ALEGG). Positions 65–75 (DGRDETLRLLD) are enriched in basic and acidic residues.

As to quaternary structure, interacts (when myristoylated) with UNC119 and UNC119B; interaction is required for localization to cilium. Expressed at high levels in the kidney and pancreas. Moderate expression seen in the skeletal muscle, liver and heart. A weak expression seen in the brain, lung, uterus, prostate, testis, small intestine and colon.

The protein resides in the cell projection. It is found in the cilium membrane. Its subcellular location is the cytoplasm. It localises to the cytoskeleton. The protein localises to the cilium axoneme. In Homo sapiens (Human), this protein is Cystin-1 (CYS1).